A 942-amino-acid chain; its full sequence is UvrABC system protein A (942 aa).

32-39 (GLSGSGKS) serves as a coordination point for ATP. The segment at 251-278 (CPVCGFTVPELEPRLFSFNAPFGSCPTC) adopts a C4-type zinc-finger fold. 2 ABC transporter domains span residues 308–589 (WNPI…KKSI) and 609–937 (GNGR…HYLK). Residue 641-648 (GVSGSGKS) participates in ATP binding. The C4-type zinc finger occupies 740–766 (CEACSGDGIIKIEMHFLPDVYVPCEVC).

It belongs to the ABC transporter superfamily. UvrA family. In terms of assembly, forms a heterotetramer with UvrB during the search for lesions.

It is found in the cytoplasm. Functionally, the UvrABC repair system catalyzes the recognition and processing of DNA lesions. UvrA is an ATPase and a DNA-binding protein. A damage recognition complex composed of 2 UvrA and 2 UvrB subunits scans DNA for abnormalities. When the presence of a lesion has been verified by UvrB, the UvrA molecules dissociate. This Streptococcus pyogenes serotype M18 (strain MGAS8232) protein is UvrABC system protein A.